Reading from the N-terminus, the 360-residue chain is S-adenosylmethionine-dependent nucleotide dehydratase RSAD2 (360 aa).

Residues 44–71 (KGQPRVRGEPKETQETHEDPGSAQPTTP) form a disordered region. The segment covering 49–63 (VRGEPKETQETHEDP) has biased composition (basic and acidic residues). Positions 68-288 (PTTPVSVNYH…LQRHKDVSCL (221 aa)) constitute a Radical SAM core domain. [4Fe-4S] cluster contacts are provided by C82, C86, and C89. The residue at position 196 (K196) is an N6-acetyllysine. Residue K205 forms a Glycyl lysine isopeptide (Lys-Gly) (interchain with G-Cter in ubiquitin) linkage.

This sequence belongs to the radical SAM superfamily. RSAD2 family. As to quaternary structure, homodimer. Interacts with IRAK1 and TRAF6. Interacts with FPPS. Interacts with HADHB. Interacts (via C-terminus) with VAPA/VAP33 (via C-terminus). Requires [4Fe-4S] cluster as cofactor. Post-translationally, acetylated by HAT1. HAT1-mediated acetylation of Lys-196 in turn recruits UBE4A that stimulates RSAD2 polyubiquitination leading to proteasomal degradation. In terms of processing, 'Lys-6'-linked polyubiquitination at Lys-205 leads to RSAD2 protein degradation. In neonatal rat tibia, specifically localized in cells of the periosteum, in osteoblasts lining endosteal and peristeal bone surfaces, to articular surfaces of cartilage and in perichondral cells but not in chondrocytes (at protein level). Expressed predominantly in bone marrow and spleen.

It is found in the endoplasmic reticulum membrane. It localises to the golgi apparatus. The protein resides in the endoplasmic reticulum. The protein localises to the lipid droplet. Its subcellular location is the mitochondrion. It is found in the mitochondrion inner membrane. It localises to the mitochondrion outer membrane. It carries out the reaction CTP + AH2 + S-adenosyl-L-methionine = 3'-deoxy-3',4'-didehydro-CTP + 5'-deoxyadenosine + L-methionine + A + H2O + H(+). With respect to regulation, IRAK1 and TRAF6 synergistically activate RSAD2 increasing its activity with CTP as substrate about 10-fold. Interferon-inducible antiviral protein which plays a major role in the cell antiviral state induced by type I and type II interferon. Catalyzes the conversion of cytidine triphosphate (CTP) to 3'-deoxy-3',4'-didehydro-CTP (ddhCTP) via a SAM-dependent radical mechanism. In turn, ddhCTP acts as a chain terminator for the RNA-dependent RNA polymerases from multiple viruses and directly inhibits viral replication. Therefore, inhibits a wide range of DNA and RNA viruses. Also promotes TLR7 and TLR9-dependent production of IFN-beta production in plasmacytoid dendritic cells (pDCs) by facilitating 'Lys-63'-linked ubiquitination of IRAK1 by TRAF6. Plays a role in CD4+ T-cells activation and differentiation. Facilitates T-cell receptor (TCR)-mediated GATA3 activation and optimal T-helper 2 (Th2) cytokine production by modulating NFKB1 and JUNB activities. Can inhibit secretion of soluble proteins. This is S-adenosylmethionine-dependent nucleotide dehydratase RSAD2 from Rattus norvegicus (Rat).